A 123-amino-acid chain; its full sequence is UPF0738 protein BALH_1059 (123 aa).

Belongs to the UPF0738 family.

The sequence is that of UPF0738 protein BALH_1059 from Bacillus thuringiensis (strain Al Hakam).